Reading from the N-terminus, the 293-residue chain is Bifunctional protein FolD (293 aa).

NADP(+)-binding positions include G165 to S167, S190, and I231.

This sequence belongs to the tetrahydrofolate dehydrogenase/cyclohydrolase family. As to quaternary structure, homodimer.

It catalyses the reaction (6R)-5,10-methylene-5,6,7,8-tetrahydrofolate + NADP(+) = (6R)-5,10-methenyltetrahydrofolate + NADPH. The catalysed reaction is (6R)-5,10-methenyltetrahydrofolate + H2O = (6R)-10-formyltetrahydrofolate + H(+). It functions in the pathway one-carbon metabolism; tetrahydrofolate interconversion. Functionally, catalyzes the oxidation of 5,10-methylenetetrahydrofolate to 5,10-methenyltetrahydrofolate and then the hydrolysis of 5,10-methenyltetrahydrofolate to 10-formyltetrahydrofolate. This Synechococcus sp. (strain WH7803) protein is Bifunctional protein FolD.